Consider the following 432-residue polypeptide: Glutamyl-tRNA reductase (432 aa).

Substrate-binding positions include 49–52, Ser101, 106–108, and Gln112; these read TCNR and ESQ. Cys50 acts as the Nucleophile in catalysis. Residue 181-186 participates in NADP(+) binding; sequence GTGETI. Residues 410-432 are disordered; sequence KPGYHHPTLQTTIVKTDETDPAS.

This sequence belongs to the glutamyl-tRNA reductase family. In terms of assembly, homodimer.

It catalyses the reaction (S)-4-amino-5-oxopentanoate + tRNA(Glu) + NADP(+) = L-glutamyl-tRNA(Glu) + NADPH + H(+). The protein operates within porphyrin-containing compound metabolism; protoporphyrin-IX biosynthesis; 5-aminolevulinate from L-glutamyl-tRNA(Glu): step 1/2. In terms of biological role, catalyzes the NADPH-dependent reduction of glutamyl-tRNA(Glu) to glutamate 1-semialdehyde (GSA). The chain is Glutamyl-tRNA reductase from Xylella fastidiosa (strain 9a5c).